Here is a 121-residue protein sequence, read N- to C-terminus: Large ribosomal subunit protein eL18 (121 aa).

The protein belongs to the eukaryotic ribosomal protein eL18 family. Part of the 50S ribosomal subunit.

The polypeptide is Large ribosomal subunit protein eL18 (Thermococcus kodakarensis (strain ATCC BAA-918 / JCM 12380 / KOD1) (Pyrococcus kodakaraensis (strain KOD1))).